The primary structure comprises 216 residues: Large ribosomal subunit protein eL15 (216 aa).

A compositionally biased stretch (basic residues) spans 170–188 (RGLRKSKGFKGTVKHKWSR). The segment at 170–201 (RGLRKSKGFKGTVKHKWSRKQKEREEKKRHEA) is disordered. The segment covering 189–201 (KQKEREEKKRHEA) has biased composition (basic and acidic residues).

Belongs to the eukaryotic ribosomal protein eL15 family.

This Saccharolobus islandicus (strain M.16.27) (Sulfolobus islandicus) protein is Large ribosomal subunit protein eL15.